Here is a 670-residue protein sequence, read N- to C-terminus: Protein angel homolog 1 (670 aa).

2 positions are modified to phosphoserine: serine 77 and serine 105.

It belongs to the CCR4/nocturin family.

The polypeptide is Protein angel homolog 1 (ANGEL1) (Homo sapiens (Human)).